Here is a 177-residue protein sequence, read N- to C-terminus: Ecotin (177 aa).

The first 23 residues, 1-23 (MQASIQNRIFFGLVVLWSTTVLE), serve as a signal peptide directing secretion. A disulfide bridge connects residues Cys83 and Cys122.

Belongs to the protease inhibitor I11 (ecotin) family. Homodimer.

The protein resides in the periplasm. General inhibitor of family S1 serine proteases. The protein is Ecotin of Prochlorococcus marinus (strain MIT 9313).